An 855-amino-acid polypeptide reads, in one-letter code: Pentatricopeptide repeat-containing protein At1g74750 (855 aa).

A disordered region spans residues 21-40 (GSRPSAADGNSCTCAEDESG). PPR repeat units follow at residues 358–392 (DGHTYTTMVGNLGRAKQFGEINKLLDEMVRDGCKP), 393–427 (NTVTYNRLIHSYGRANYLKEAMNVFNQMQEAGCEP), 428–462 (DRVTYCTLIDIHAKAGFLDIAMDMYQRMQEAGLSP), 463–497 (DTFTYSVIINCLGKAGHLPAAHRLFCEMVGQGCTP), 498–532 (NLVTFNIMIALHAKARNYETALKLYRDMQNAGFQP), 533–567 (DKVTYSIVMEVLGHCGFLEEAEGVFAEMQRKNWVP), 568–602 (DEPVYGLLVDLWGKAGNVDKAWQWYQAMLQAGLRP), and 603–637 (NVPTCNSLLSTFLRVHRMSEAYNLLQSMLALGLHP). The Smr domain occupies 755–838 (INLHVMSEGT…NSGCFVGSGE (84 aa)).

It belongs to the PPR family. P subfamily.

In Arabidopsis thaliana (Mouse-ear cress), this protein is Pentatricopeptide repeat-containing protein At1g74750.